The following is a 417-amino-acid chain: MSSEKASSKSTPEAPWPVREVNTQVKQWIERLGHLWVEGQLAQINVKPNWKLSYLTLRDVEQEMSVQLTCPTDIIRNRPTPLKDGDRVIVYGKPAFYAGRGTFSLWVTDIRPVGIGELLARIEELRKRLAAEGLFDPARKKRLPFLPNRVGLITGRGSAAERDVLSVAKDRWPEVQFEVINTAVQGASAVPEIIEALRVLDQDPRVDVIIIARGGGSVEDLLPFSEEALQRAVAAAQTPVVSAIGHEPDTPVLDNVADLRAATPTDAAKRVVPDVAEERMLINQLRSRSAAALRGWVQREQQALAAIRTRPVLADPMTPINRRRDEIAQAVGLIRRDVTHLVRTEQALVASLRAQVSALGPSATLARGYSVVQVIPRDGSAPEVVTTIEQSPPGSQLRIRVADGSITAASMGTQQAN.

The protein belongs to the XseA family. As to quaternary structure, heterooligomer composed of large and small subunits.

It is found in the cytoplasm. It catalyses the reaction Exonucleolytic cleavage in either 5'- to 3'- or 3'- to 5'-direction to yield nucleoside 5'-phosphates.. Bidirectionally degrades single-stranded DNA into large acid-insoluble oligonucleotides, which are then degraded further into small acid-soluble oligonucleotides. This is Exodeoxyribonuclease 7 large subunit from Corynebacterium glutamicum (strain ATCC 13032 / DSM 20300 / JCM 1318 / BCRC 11384 / CCUG 27702 / LMG 3730 / NBRC 12168 / NCIMB 10025 / NRRL B-2784 / 534).